We begin with the raw amino-acid sequence, 337 residues long: Holliday junction branch migration complex subunit RuvB (337 aa).

The interval Met-1–Tyr-179 is large ATPase domain (RuvB-L). ATP-binding positions include Leu-18, Arg-19, Gly-60, Lys-63, Thr-64, Ser-65, Glu-126–Tyr-128, Arg-169, Tyr-179, and Arg-216. Thr-64 serves as a coordination point for Mg(2+). The interval Ser-180–Leu-250 is small ATPAse domain (RuvB-S). A head domain (RuvB-H) region spans residues Asp-253–Lys-337. DNA-binding residues include Lys-308 and Arg-313.

It belongs to the RuvB family. In terms of assembly, homohexamer. Forms an RuvA(8)-RuvB(12)-Holliday junction (HJ) complex. HJ DNA is sandwiched between 2 RuvA tetramers; dsDNA enters through RuvA and exits via RuvB. An RuvB hexamer assembles on each DNA strand where it exits the tetramer. Each RuvB hexamer is contacted by two RuvA subunits (via domain III) on 2 adjacent RuvB subunits; this complex drives branch migration. In the full resolvosome a probable DNA-RuvA(4)-RuvB(12)-RuvC(2) complex forms which resolves the HJ.

Its subcellular location is the cytoplasm. It catalyses the reaction ATP + H2O = ADP + phosphate + H(+). The RuvA-RuvB-RuvC complex processes Holliday junction (HJ) DNA during genetic recombination and DNA repair, while the RuvA-RuvB complex plays an important role in the rescue of blocked DNA replication forks via replication fork reversal (RFR). RuvA specifically binds to HJ cruciform DNA, conferring on it an open structure. The RuvB hexamer acts as an ATP-dependent pump, pulling dsDNA into and through the RuvAB complex. RuvB forms 2 homohexamers on either side of HJ DNA bound by 1 or 2 RuvA tetramers; 4 subunits per hexamer contact DNA at a time. Coordinated motions by a converter formed by DNA-disengaged RuvB subunits stimulates ATP hydrolysis and nucleotide exchange. Immobilization of the converter enables RuvB to convert the ATP-contained energy into a lever motion, pulling 2 nucleotides of DNA out of the RuvA tetramer per ATP hydrolyzed, thus driving DNA branch migration. The RuvB motors rotate together with the DNA substrate, which together with the progressing nucleotide cycle form the mechanistic basis for DNA recombination by continuous HJ branch migration. Branch migration allows RuvC to scan DNA until it finds its consensus sequence, where it cleaves and resolves cruciform DNA. The chain is Holliday junction branch migration complex subunit RuvB from Chlamydia felis (strain Fe/C-56) (Chlamydophila felis).